The chain runs to 268 residues: 4-hydroxy-tetrahydrodipicolinate reductase (268 aa).

8–13 (GAAGRM) contributes to the NAD(+) binding site. Arg36 is an NADP(+) binding site. Residues 99-101 (GTT) and 123-126 (AANF) contribute to the NAD(+) site. Residue His156 is the Proton donor/acceptor of the active site. His157 contacts (S)-2,3,4,5-tetrahydrodipicolinate. Residue Lys160 is the Proton donor of the active site. A (S)-2,3,4,5-tetrahydrodipicolinate-binding site is contributed by 166–167 (GT).

Belongs to the DapB family.

Its subcellular location is the cytoplasm. The catalysed reaction is (S)-2,3,4,5-tetrahydrodipicolinate + NAD(+) + H2O = (2S,4S)-4-hydroxy-2,3,4,5-tetrahydrodipicolinate + NADH + H(+). It carries out the reaction (S)-2,3,4,5-tetrahydrodipicolinate + NADP(+) + H2O = (2S,4S)-4-hydroxy-2,3,4,5-tetrahydrodipicolinate + NADPH + H(+). It functions in the pathway amino-acid biosynthesis; L-lysine biosynthesis via DAP pathway; (S)-tetrahydrodipicolinate from L-aspartate: step 4/4. Catalyzes the conversion of 4-hydroxy-tetrahydrodipicolinate (HTPA) to tetrahydrodipicolinate. The polypeptide is 4-hydroxy-tetrahydrodipicolinate reductase (Pseudomonas fluorescens (strain ATCC BAA-477 / NRRL B-23932 / Pf-5)).